A 265-amino-acid polypeptide reads, in one-letter code: Thioredoxin-related transmembrane protein 2 homolog (265 aa).

A signal peptide spans 1-32 (MLIPRLDEVRRALTAFHFFNTLLALAFPVIRS). Residues 33 to 96 (TSLCDYVFAV…KIAGMFLFIR (64 aa)) are Extracellular-facing. A helical transmembrane segment spans residues 97–117 (ADILPGIIYILACLIVTVLFP). Topologically, residues 118 to 265 (EPVYNGPEQV…KKGAKAKKED (148 aa)) are cytoplasmic. One can recognise a Thioredoxin domain in the interval 126 to 230 (QVTYFQGEQL…RPLVNDSRRA (105 aa)). Positions 262 to 265 (KKED) match the Di-lysine motif motif.

The protein resides in the membrane. The chain is Thioredoxin-related transmembrane protein 2 homolog from Caenorhabditis elegans.